Reading from the N-terminus, the 123-residue chain is NHL-repeat-containing protein 4 (123 aa).

NHL repeat units follow at residues 35–78 (QPLG…FPRA) and 79–119 (GPPI…YQGL).

This Homo sapiens (Human) protein is NHL-repeat-containing protein 4 (NHLRC4).